A 206-amino-acid polypeptide reads, in one-letter code: 21.9 kDa heat shock protein (206 aa).

The N-terminal stretch at 1–29 is a signal peptide; the sequence is MAAVAEREVLGMVAAVAAMVVMMAPPAAA. One can recognise a sHSP domain in the interval 65–187; sequence EPAAVALARC…GREPRVVAID (123 aa). Positions 94 to 96 match the Cell attachment site motif; sequence RGD.

Belongs to the small heat shock protein (HSP20) family. As to quaternary structure, may form oligomeric structures.

Its subcellular location is the endoplasmic reticulum. The polypeptide is 21.9 kDa heat shock protein (HSP21.9) (Oryza sativa subsp. japonica (Rice)).